The primary structure comprises 1076 residues: DNA-directed RNA polymerase subunit beta (1076 aa).

The protein belongs to the RNA polymerase beta chain family. As to quaternary structure, in plastids the minimal PEP RNA polymerase catalytic core is composed of four subunits: alpha, beta, beta', and beta''. When a (nuclear-encoded) sigma factor is associated with the core the holoenzyme is formed, which can initiate transcription.

The protein localises to the plastid. It localises to the chloroplast. It carries out the reaction RNA(n) + a ribonucleoside 5'-triphosphate = RNA(n+1) + diphosphate. DNA-dependent RNA polymerase catalyzes the transcription of DNA into RNA using the four ribonucleoside triphosphates as substrates. The protein is DNA-directed RNA polymerase subunit beta of Lolium perenne (Perennial ryegrass).